A 381-amino-acid polypeptide reads, in one-letter code: KRR1 small subunit processome component homolog (381 aa).

A disordered region spans residues 1-51 (MASPSLERPEKGAGKSEFRNQKPKPENQDESELLTVPDGWKEPAFSKEDNP). The residue at position 2 (alanine 2) is an N-acetylalanine. Phosphoserine occurs at positions 3 and 5. 2 stretches are compositionally biased toward basic and acidic residues: residues 7–27 (ERPE…KPEN) and 39–51 (GWKE…EDNP). Residue lysine 24 forms a Glycyl lysine isopeptide (Lys-Gly) (interchain with G-Cter in SUMO2) linkage. Positions 154-206 (KERFVKRRQRLIGPKGSTLKALELLTNCYIMVQGNTVSAIGPFSGLKEVRKVV) constitute a KH domain. Residues 250-262 (NVNKRKEPKKKTV) show a composition bias toward basic residues. Disordered stretches follow at residues 250-278 (NVNK…ESQI) and 309-338 (AISK…ASTE). Residues lysine 340 and lysine 369 each participate in a glycyl lysine isopeptide (Lys-Gly) (interchain with G-Cter in SUMO2) cross-link.

This sequence belongs to the KRR1 family. As to quaternary structure, part of the small subunit (SSU) processome, composed of more than 70 proteins and the RNA chaperone small nucleolar RNA (snoRNA) U3. In terms of assembly, (Microbial infection) Directly interacts with HIV-1 protein VPR. Also identified in a complex with NR3C1 and HIV-1 protein VPR.

The protein resides in the nucleus. Its subcellular location is the nucleolus. It is found in the cytoplasm. Part of the small subunit (SSU) processome, first precursor of the small eukaryotic ribosomal subunit. During the assembly of the SSU processome in the nucleolus, many ribosome biogenesis factors, an RNA chaperone and ribosomal proteins associate with the nascent pre-rRNA and work in concert to generate RNA folding, modifications, rearrangements and cleavage as well as targeted degradation of pre-ribosomal RNA by the RNA exosome. The chain is KRR1 small subunit processome component homolog from Homo sapiens (Human).